A 145-amino-acid chain; its full sequence is uncharacterized protein (145 aa).

Positions methionine 1–threonine 49 are disordered. The segment covering asparagine 22–glutamate 32 has biased composition (basic and acidic residues). The segment covering arginine 33–tyrosine 42 has biased composition (basic residues). Residue serine 68 is modified to Phosphoserine. In terms of domain architecture, Cytochrome b5 heme-binding spans proline 69–valine 145. 2 residues coordinate heme: histidine 104 and histidine 127.

It belongs to the cytochrome b5 family.

The protein localises to the cytoplasm. This is an uncharacterized protein from Schizosaccharomyces pombe (strain 972 / ATCC 24843) (Fission yeast).